The primary structure comprises 175 residues: CDP-archaeol synthase (175 aa).

Helical transmembrane passes span 41 to 61, 82 to 102, 122 to 142, and 150 to 170; these read GLFS…WLSS, LIVV…KSFF, FVVG…VSNF, and VIII…LIGV.

This sequence belongs to the CDP-archaeol synthase family. It depends on Mg(2+) as a cofactor.

It localises to the cell membrane. It catalyses the reaction 2,3-bis-O-(geranylgeranyl)-sn-glycerol 1-phosphate + CTP + H(+) = CDP-2,3-bis-O-(geranylgeranyl)-sn-glycerol + diphosphate. Its pathway is membrane lipid metabolism; glycerophospholipid metabolism. Catalyzes the formation of CDP-2,3-bis-(O-geranylgeranyl)-sn-glycerol (CDP-archaeol) from 2,3-bis-(O-geranylgeranyl)-sn-glycerol 1-phosphate (DGGGP) and CTP. This reaction is the third ether-bond-formation step in the biosynthesis of archaeal membrane lipids. The sequence is that of CDP-archaeol synthase from Methanosarcina barkeri (strain Fusaro / DSM 804).